The primary structure comprises 1157 residues: MNRNNQNEYEIIDAPHCGCPSDDDVRYPLASDPNAALQNMNYKDYLQMTDEDYTDSYINPSLSISGRDAVQTALTVVGRILGALGVPFSGQIVSFYQFLLNTLWPVNDTAIWEAFMRQVEELVNQQITEFARNQALARLQGLGDSFNVYQRSLQNWLADRNDTRNLSVVRAQFIALDLDFVNAIPLFAVNGQQVPLLSVYAQAVNLHLLLLKDASLFGEGWGFTQGEISTYYDRQLELTAKYTNYCETWYNTGLDRLRGTNTESWLRYHQFRREMTLVVLDVVALFPYYDVRLYPTGSNPQLTREVYTDPIVFNPPANVGLCRRWGTNPYNTFSELENAFIRPPHLFDRLNSLTISSNRFPVSSNFMDYWSGHTLRRSYLNDSAVQEDSYGLITTTRATINPGVDGTNRIESTAVDFRSALIGIYGVNRASFVPGGLFNGTTSPANGGCRDLYDTNDELPPDESTGSSTHRLSHVTFFSFQTNQAGSIANAGSVPTYVWTRRDVDLNNTITPNRITQLPLVKASAPVSGTTVLKGPGFTGGGILRRTTNGTFGTLRVTVNSPLTQQYRLRVRFASTGNFSIRVLRGGVSIGDVRLGSTMNRGQELTYESFFTREFTTTGPFNPPFTFTQAQEILTVNAEGVSTGGEYYIDRIEIVPVNPAREAEEDLEAAKKAVASLFTRTRDGLQVNVTDYQVDQAANLVSCLSDEQYGHDKKMLLEAVRAAKRLSRERNLLQDPDFNTINSTEENGWKASNGVTISEGGPFFKGRALQLASARENYPTYIYQKVDASVLKPYTRYRLDGFVKSSQDLEIDLIHHHKVHLVKNVPDNLVSDTYSDGSCSGINRCDEQHQVDMQLDAEHHPMDCCEAAQTHEFSSYINTGDLNASVDQGIWVVLKVRTTDGYATLGNLELVEVGPLSGESLEREQRDNAKWNAELGRKRAEIDRVYLAAKQAINHLFVDYQDQQLNPEIGLAEINEASNLVESISGVYSDTLLQIPGINYEIYTELSDRLQQASYLYTSRNAVQNGDFNSGLDSWNTTMDASVQQDGNMHFLVLSHWDAQVSQQLRVNPNCKYVLRVTARKVGGGDGYVTIRDGAHHQETLTFNACDYDVNGTYVNDNSYITEEVVFYPETKHMWVEVSESEGSFYIDSIEFIETQE.

The protein belongs to the delta endotoxin family.

In terms of biological role, promotes colloidosmotic lysis by binding to the midgut epithelial cells of Lepidoptera larvae. Has a fairly broad spectrum of activity against members of the Pyralidae, Plutellidae, Sphingidae and Noctuidae families. It was the first insecticidal crystal protein characterized with activity against cutworms. No activity is observed against some beetles, such as the Colorado potato beetle. This chain is Pesticidal crystal protein Cry9Ca (cry9Ca), found in Bacillus thuringiensis subsp. tolworthi.